A 150-amino-acid polypeptide reads, in one-letter code: uncharacterized protein (150 aa).

This is an uncharacterized protein from Methanocaldococcus jannaschii (strain ATCC 43067 / DSM 2661 / JAL-1 / JCM 10045 / NBRC 100440) (Methanococcus jannaschii).